The following is a 68-amino-acid chain: Large ribosomal subunit protein bL31 (68 aa).

Cys16, Cys18, Cys37, and Cys40 together coordinate Zn(2+).

It belongs to the bacterial ribosomal protein bL31 family. Type A subfamily. As to quaternary structure, part of the 50S ribosomal subunit. Requires Zn(2+) as cofactor.

In terms of biological role, binds the 23S rRNA. The protein is Large ribosomal subunit protein bL31 of Nitrosococcus oceani (strain ATCC 19707 / BCRC 17464 / JCM 30415 / NCIMB 11848 / C-107).